Here is a 271-residue protein sequence, read N- to C-terminus: Tryptophan synthase alpha chain (271 aa).

Residues Glu49 and Asp60 each act as proton acceptor in the active site.

The protein belongs to the TrpA family. In terms of assembly, tetramer of two alpha and two beta chains.

It carries out the reaction (1S,2R)-1-C-(indol-3-yl)glycerol 3-phosphate + L-serine = D-glyceraldehyde 3-phosphate + L-tryptophan + H2O. It participates in amino-acid biosynthesis; L-tryptophan biosynthesis; L-tryptophan from chorismate: step 5/5. The alpha subunit is responsible for the aldol cleavage of indoleglycerol phosphate to indole and glyceraldehyde 3-phosphate. This is Tryptophan synthase alpha chain from Burkholderia cenocepacia (strain HI2424).